A 101-amino-acid polypeptide reads, in one-letter code: Small ribosomal subunit protein uS14 (101 aa).

Belongs to the universal ribosomal protein uS14 family. In terms of assembly, part of the 30S ribosomal subunit. Contacts proteins S3 and S10.

In terms of biological role, binds 16S rRNA, required for the assembly of 30S particles and may also be responsible for determining the conformation of the 16S rRNA at the A site. The sequence is that of Small ribosomal subunit protein uS14 from Ehrlichia canis (strain Jake).